We begin with the raw amino-acid sequence, 78 residues long: Large ribosomal subunit protein bL28 (78 aa).

Residues 1-23 (MSRICQITGKKPLSGNKRSHSMN) are disordered.

The protein belongs to the bacterial ribosomal protein bL28 family.

The polypeptide is Large ribosomal subunit protein bL28 (Wigglesworthia glossinidia brevipalpis).